Here is a 338-residue protein sequence, read N- to C-terminus: MTKQKVAILGPGSWGTALSQVLNDNGHDVRLWGNIPDQIEEINTKHTNRHYFKDIVLDKNITATLDLGQALSDVDAVLFVVPTKVTRLVARQVAAILDHKVVVMHASKGLEPETHERLSTILEEEIPAHFRSEVVVVSGPSHAEETIVRDITLITAASKDIEAAKYVQSLFSNHYFRLYTNTDVIGVETAGALKNIIAVGAGALHGLGYGDNAKAAVITRGLAEITRLGVKLGADPLTYSGLSGVGDLIVTGTSVHSRNWRAGAALGRGEKLEDIERNMGMVIEGIATTKVAYEIAQDLGVYMPITTAIYKSIYEGADIKESILGMMSNEFRSENEWH.

NADPH contacts are provided by Ser13, Trp14, and Lys108. Sn-glycerol 3-phosphate-binding residues include Lys108, Gly139, and Ser141. Ala143 is an NADPH binding site. Lys194, Asp247, Ser257, Arg258, and Asn259 together coordinate sn-glycerol 3-phosphate. Lys194 (proton acceptor) is an active-site residue. Residue Arg258 participates in NADPH binding. Val282 and Glu284 together coordinate NADPH.

It belongs to the NAD-dependent glycerol-3-phosphate dehydrogenase family.

The protein localises to the cytoplasm. The enzyme catalyses sn-glycerol 3-phosphate + NAD(+) = dihydroxyacetone phosphate + NADH + H(+). The catalysed reaction is sn-glycerol 3-phosphate + NADP(+) = dihydroxyacetone phosphate + NADPH + H(+). Its pathway is membrane lipid metabolism; glycerophospholipid metabolism. In terms of biological role, catalyzes the reduction of the glycolytic intermediate dihydroxyacetone phosphate (DHAP) to sn-glycerol 3-phosphate (G3P), the key precursor for phospholipid synthesis. This chain is Glycerol-3-phosphate dehydrogenase [NAD(P)+], found in Streptococcus pyogenes serotype M12 (strain MGAS9429).